Consider the following 273-residue polypeptide: Dormancy associated translation inhibitor (273 aa).

In terms of assembly, interacts with human TLR2.

In terms of biological role, involved in translation regulation. Can also stimulate macrophages and peripheral blood mononuclear cells (PBMC) to secrete important cytokines that may be significant in granuloma formation and its maintenance. Increases secretion of IFN-gamma, TNF-alpha, IL-1 beta and IL-8 through human Toll-like receptor 2 (TLR2) signaling pathway. The polypeptide is Dormancy associated translation inhibitor (Mycobacterium tuberculosis (strain CDC 1551 / Oshkosh)).